A 582-amino-acid polypeptide reads, in one-letter code: Phosphoglucomutase, cytoplasmic (582 aa).

Arg25 and Ser124 together coordinate alpha-D-glucose 1,6-bisphosphate. The active-site Phosphoserine intermediate is Ser124. The Mg(2+) site is built by Ser124, Asp299, Asp301, and Asp303. Ser124 is modified (phosphoserine). Alpha-D-glucose 1,6-bisphosphate is bound by residues Asp303, Arg304, Thr367, Glu386, Ser388, and Lys399.

Belongs to the phosphohexose mutase family. As to quaternary structure, monomer. Mg(2+) is required as a cofactor.

It localises to the cytoplasm. It catalyses the reaction alpha-D-glucose 1-phosphate = alpha-D-glucose 6-phosphate. The catalysed reaction is O-phospho-L-seryl-[protein] + alpha-D-glucose 1-phosphate = alpha-D-glucose 1,6-bisphosphate + L-seryl-[protein]. The enzyme catalyses alpha-D-glucose 1,6-bisphosphate + L-seryl-[protein] = O-phospho-L-seryl-[protein] + alpha-D-glucose 6-phosphate. Catalyzes the reversible isomerization of alpha-D-glucose 1-phosphate to alpha-D-glucose 6-phosphate. The mechanism proceeds via the intermediate compound alpha-D-glucose 1,6-bisphosphate. This enzyme participates in both the breakdown and synthesis of glucose. The sequence is that of Phosphoglucomutase, cytoplasmic (PGM1) from Populus tremula (European aspen).